The chain runs to 553 residues: Glucose-6-phosphate isomerase (553 aa).

Glu355 functions as the Proton donor in the catalytic mechanism. Active-site residues include His386 and Lys513.

It belongs to the GPI family.

The protein resides in the cytoplasm. It carries out the reaction alpha-D-glucose 6-phosphate = beta-D-fructose 6-phosphate. It participates in carbohydrate biosynthesis; gluconeogenesis. The protein operates within carbohydrate degradation; glycolysis; D-glyceraldehyde 3-phosphate and glycerone phosphate from D-glucose: step 2/4. In terms of biological role, catalyzes the reversible isomerization of glucose-6-phosphate to fructose-6-phosphate. The chain is Glucose-6-phosphate isomerase from Baumannia cicadellinicola subsp. Homalodisca coagulata.